The primary structure comprises 97 residues: Putative membrane protein insertion efficiency factor (97 aa).

Positions 68–97 (VPGTELNTAPRSGQACNPTESTHSTTQTRH) are disordered. The span at 72-97 (ELNTAPRSGQACNPTESTHSTTQTRH) shows a compositional bias: polar residues.

This sequence belongs to the UPF0161 family.

Its subcellular location is the cell inner membrane. Could be involved in insertion of integral membrane proteins into the membrane. This Marinobacter nauticus (strain ATCC 700491 / DSM 11845 / VT8) (Marinobacter aquaeolei) protein is Putative membrane protein insertion efficiency factor.